Consider the following 266-residue polypeptide: 2-C-methyl-D-erythritol 4-phosphate cytidylyltransferase (266 aa).

The tract at residues 229 to 266 (NRDCGPGTRDPESAHPQSSVSASAFSGPGSRAPGPEEI) is disordered. Residues 243–252 (HPQSSVSASA) are compositionally biased toward polar residues.

It belongs to the IspD/TarI cytidylyltransferase family. IspD subfamily.

The enzyme catalyses 2-C-methyl-D-erythritol 4-phosphate + CTP + H(+) = 4-CDP-2-C-methyl-D-erythritol + diphosphate. Its pathway is isoprenoid biosynthesis; isopentenyl diphosphate biosynthesis via DXP pathway; isopentenyl diphosphate from 1-deoxy-D-xylulose 5-phosphate: step 2/6. In terms of biological role, catalyzes the formation of 4-diphosphocytidyl-2-C-methyl-D-erythritol from CTP and 2-C-methyl-D-erythritol 4-phosphate (MEP). This is 2-C-methyl-D-erythritol 4-phosphate cytidylyltransferase from Xanthomonas axonopodis pv. citri (strain 306).